The chain runs to 209 residues: Thymidine kinase (209 aa).

Residues Gly-16–Thr-23 and Asp-90–Gln-93 each bind ATP. The Proton acceptor role is filled by Glu-91.

Belongs to the thymidine kinase family. As to quaternary structure, homotetramer.

The protein resides in the cytoplasm. The catalysed reaction is thymidine + ATP = dTMP + ADP + H(+). This chain is Thymidine kinase, found in Aster yellows witches'-broom phytoplasma (strain AYWB).